A 34-amino-acid chain; its full sequence is Photosystem II reaction center protein M (34 aa).

A helical membrane pass occupies residues 7-27; that stretch reads GFIATILFVLVPTVFLLILYI.

Belongs to the PsbM family. In terms of assembly, PSII is composed of 1 copy each of membrane proteins PsbA, PsbB, PsbC, PsbD, PsbE, PsbF, PsbH, PsbI, PsbJ, PsbK, PsbL, PsbM, PsbT, PsbX, PsbY, PsbZ, Psb30/Ycf12, peripheral proteins PsbO, CyanoQ (PsbQ), PsbU, PsbV and a large number of cofactors. It forms dimeric complexes.

It localises to the cellular thylakoid membrane. One of the components of the core complex of photosystem II (PSII). PSII is a light-driven water:plastoquinone oxidoreductase that uses light energy to abstract electrons from H(2)O, generating O(2) and a proton gradient subsequently used for ATP formation. It consists of a core antenna complex that captures photons, and an electron transfer chain that converts photonic excitation into a charge separation. This subunit is found at the monomer-monomer interface. The chain is Photosystem II reaction center protein M from Picosynechococcus sp. (strain ATCC 27264 / PCC 7002 / PR-6) (Agmenellum quadruplicatum).